A 180-amino-acid polypeptide reads, in one-letter code: Large ribosomal subunit protein uL10 (180 aa).

It belongs to the universal ribosomal protein uL10 family. Part of the ribosomal stalk of the 50S ribosomal subunit. The N-terminus interacts with L11 and the large rRNA to form the base of the stalk. The C-terminus forms an elongated spine to which L12 dimers bind in a sequential fashion forming a multimeric L10(L12)X complex.

Forms part of the ribosomal stalk, playing a central role in the interaction of the ribosome with GTP-bound translation factors. This Thermosipho melanesiensis (strain DSM 12029 / CIP 104789 / BI429) protein is Large ribosomal subunit protein uL10.